The following is a 428-amino-acid chain: MAKTVAYFYDPDVGNFHYGAGHPMKPHRLALTHSLVLHYGLYKKMIVFKPYQASQHDMCRFHSEDYIDFLQRVSPTNMQGFTKSLNAFNVGDDCPVFPGLFEFCSRYTGASLQGATQLNNKICDIAINWAGGLHHAKKFEASGFCYVNDIVIGILELLKYHPRVLYIDIDIHHGDGVQEAFYLTDRVMTVSFHKYGNYFFPGTGDMYEVGAESGRYYCLNVPLRDGIDDQSYKHLFQPVINQVVDFYQPTCIVLQCGADSLGCDRLGCFNLSIRGHGECVEYVKSFNIPLLVLGGGGYTVRNVARCWTYETSLLVEEAISEELPYSEYFEYFAPDFTLHPDVSTRIENQNSRQYLDQIRQTIFENLKMLNHAPSVQIRDVPAGLLTYDRTDEADAEERGPEENYSRPEAPNEFYDGDHDNDKESDVEI.

A histone deacetylase region spans residues 3–316; the sequence is KTVAYFYDPD…WTYETSLLVE (314 aa). 1D-myo-inositol 1,4,5,6-tetrakisphosphate-binding residues include histidine 17, glycine 21, and lysine 25. Histidine 135 is a catalytic residue. Aspartate 170, histidine 172, and aspartate 259 together coordinate Zn(2+). Arginine 265 provides a ligand contact to 1D-myo-inositol 1,4,5,6-tetrakisphosphate. Composition is skewed to basic and acidic residues over residues 388–405 and 415–428; these read DRTD…ENYS and DGDH…DVEI. The interval 388 to 428 is disordered; sequence DRTDEADAEERGPEENYSRPEAPNEFYDGDHDNDKESDVEI. A Phosphoserine modification is found at serine 424.

The protein belongs to the histone deacetylase family. HD type 1 subfamily. As to quaternary structure, interacts with HDAC7 and HDAC9. Interacts with HDAC10, DAXX and DACH1. Found in a complex with NCOR1 and NCOR2. Component of the N-Cor repressor complex, at least composed of NCOR1, NCOR2, HDAC3, TBL1X, TBL1R, CORO2A and GPS2. Interacts with BCOR, MJD2A/JHDM3A, NRIP1, PRDM6 and SRY. Interacts with BTBD14B. Interacts with GLIS2. Interacts (via the DNA-binding domain) with NR2C1; the interaction recruits phosphorylated NR2C1 to PML bodies for sumoylation. Component of the Notch corepressor complex. Interacts with CBFA2T3 and NKAP. Interacts with APEX1; the interaction is not dependent on the acetylated status of APEX1. Interacts with and deacetylates MAPK14. Interacts with ZMYND15. Interacts with SMRT/NCOR2 and BCL6 on DNA enhancer elements. Interacts with INSM1. Interacts with XBP1; the interaction occurs in endothelial cell (EC) under disturbed flow. Interacts (via C-terminus) with CCAR2 (via N-terminus). Interacts with and deacetylates MEF2D. Interacts with BEND3. Interacts with NKAPL. Interacts with DHX36; this interaction occurs in a RNA-dependent manner. Interacts weakly with CRY1; this interaction is enhanced in the presence of FBXL3. Interacts with FBXL3 and BMAL1. Interacts with NCOR1. Interacts with RARA. Interacts with SETD5. In terms of processing, deubiquitinated on 'Lys-63'-linked ubiquitin chains by USP38; leading to a decreased level of histone acetylation. Post-translationally, sumoylated in vitro.

The protein resides in the nucleus. Its subcellular location is the chromosome. It is found in the cytoplasm. The protein localises to the cytosol. It catalyses the reaction N(6)-acetyl-L-lysyl-[histone] + H2O = L-lysyl-[histone] + acetate. It carries out the reaction N(6)-acetyl-L-lysyl-[protein] + H2O = L-lysyl-[protein] + acetate. The catalysed reaction is N(6)-(2E)-butenoyl-L-lysyl-[protein] + H2O = (2E)-2-butenoate + L-lysyl-[protein]. The enzyme catalyses N(6)-(2-hydroxyisobutanoyl)-L-lysyl-[protein] + H2O = 2-hydroxy-2-methylpropanoate + L-lysyl-[protein]. It catalyses the reaction N(6)-[(S)-lactoyl]-L-lysyl-[protein] + H2O = (S)-lactate + L-lysyl-[protein]. Its activity is regulated as follows. Inositol tetraphosphate (1D-myo-inositol 1,4,5,6-tetrakisphosphate) promotes the histone deacetylase activity by acting as an intermolecular glue between HDAC3 and NCOR2, thereby promoting its association with the N-Cor complex, a prerequisite for the histone deacetylase activity. Functionally, histone deacetylase that catalyzes the deacetylation of lysine residues on the N-terminal part of the core histones (H2A, H2B, H3 and H4), and some other non-histone substrates. Histone deacetylation gives a tag for epigenetic repression and plays an important role in transcriptional regulation, cell cycle progression and developmental events. Histone deacetylases act via the formation of large multiprotein complexes, such as N-Cor repressor complex, which activate the histone deacetylase activity. Participates in the BCL6 transcriptional repressor activity by deacetylating the H3 'Lys-27' (H3K27) on enhancer elements, antagonizing EP300 acetyltransferase activity and repressing proximal gene expression. Acts as a molecular chaperone for shuttling phosphorylated NR2C1 to PML bodies for sumoylation. Contributes, together with XBP1 isoform 1, to the activation of NFE2L2-mediated HMOX1 transcription factor gene expression in a PI(3)K/mTORC2/Akt-dependent signaling pathway leading to endothelial cell (EC) survival under disturbed flow/oxidative stress. Regulates both the transcriptional activation and repression phases of the circadian clock in a deacetylase activity-independent manner. During the activation phase, promotes the accumulation of ubiquitinated BMAL1 at the E-boxes and during the repression phase, blocks FBXL3-mediated CRY1/2 ubiquitination and promotes the interaction of CRY1 and BMAL1. The NCOR1-HDAC3 complex regulates the circadian expression of the core clock gene BMAL1 and the genes involved in lipid metabolism in the liver. Also functions as a deacetylase for non-histone targets, such as KAT5, MEF2D, MAPK14, RARA and STAT3. Serves as a corepressor of RARA, mediating its deacetylation and repression, leading to inhibition of RARE DNA element binding. In association with RARA, plays a role in the repression of microRNA-10a and thereby in the inflammatory response. In addition to protein deacetylase activity, also acts as a protein-lysine deacylase by recognizing other acyl groups: catalyzes removal of (2E)-butenoyl (crotonyl), lactoyl (lactyl) and 2-hydroxyisobutanoyl (2-hydroxyisobutyryl) acyl groups from lysine residues, leading to protein decrotonylation, delactylation and de-2-hydroxyisobutyrylation, respectively. Catalyzes decrotonylation of MAPRE1/EB1. Mediates delactylation NBN/NBS1, thereby inhibiting DNA double-strand breaks (DSBs) via homologous recombination (HR). The protein is Histone deacetylase 3 (HDAC3) of Pongo abelii (Sumatran orangutan).